The following is a 413-amino-acid chain: Snake venom metalloproteinase AaPA (413 aa).

Residues 1 to 20 (MIQVLLVTICLAAFPYQGSS) form the signal peptide. A propeptide spanning residues 21 to 189 (IILESGKVND…KKASQLIVST (169 aa)) is cleaved from the precursor. Residues 193-390 (RYMEIVIVVD…ENPPCILNKP (198 aa)) enclose the Peptidase M12B domain. Residues Glu-196 and Asp-280 each coordinate Ca(2+). 3 disulfide bridges follow: Cys-304-Cys-385, Cys-344-Cys-369, and Cys-346-Cys-352. A Zn(2+)-binding site is contributed by His-329. Residue Glu-330 is part of the active site. Zn(2+) contacts are provided by His-333 and His-339. 7 residues coordinate Ca(2+): Cys-385, Asn-388, Val-400, Asn-403, Leu-405, Glu-407, and Asp-413. The propeptide occupies 391–413 (LRTDTVSTPVSGNELLEAEKDYD).

The protein belongs to the venom metalloproteinase (M12B) family. P-I subfamily. In terms of assembly, monomer. The cofactor is Zn(2+). In terms of tissue distribution, expressed by the venom gland.

It is found in the secreted. Functionally, snake venom zinc metalloprotease that may activate prothrombin. This is Snake venom metalloproteinase AaPA from Deinagkistrodon acutus (Hundred-pace snake).